Consider the following 144-residue polypeptide: Large ribosomal subunit protein uL11 (144 aa).

Belongs to the universal ribosomal protein uL11 family. As to quaternary structure, part of the ribosomal stalk of the 50S ribosomal subunit. Interacts with L10 and the large rRNA to form the base of the stalk. L10 forms an elongated spine to which L12 dimers bind in a sequential fashion forming a multimeric L10(L12)X complex. One or more lysine residues are methylated.

Forms part of the ribosomal stalk which helps the ribosome interact with GTP-bound translation factors. This is Large ribosomal subunit protein uL11 from Gluconobacter oxydans (strain 621H) (Gluconobacter suboxydans).